Here is a 131-residue protein sequence, read N- to C-terminus: UPF0102 protein YraN (131 aa).

Positions 1–19 (MATVPTRSGSPRQLTTKQT) are enriched in polar residues. Residues 1-20 (MATVPTRSGSPRQLTTKQTG) form a disordered region.

It belongs to the UPF0102 family.

The sequence is that of UPF0102 protein YraN from Escherichia coli O17:K52:H18 (strain UMN026 / ExPEC).